Consider the following 266-residue polypeptide: NADP-dependent mannitol dehydrogenase (266 aa).

Residues N107 and K140 each contribute to the NADP(+) site. S159 (proton donor) is an active-site residue. Positions 174, 178, 206, and 208 each coordinate NADP(+). The active-site Proton acceptor is Y174. The Lowers pKa of active site Tyr role is filled by K178.

Belongs to the short-chain dehydrogenases/reductases (SDR) family. In terms of assembly, homotetramer.

The enzyme catalyses D-mannitol + NADP(+) = D-fructose + NADPH + H(+). Its function is as follows. Catalyzes the interconversion between D-mannitol and D-fructose. Plays a key role in liamocins biosynthesis by providing the mannitol moity that is linked to 3,5-dihydroxydecanoic acid (provided by the HR-PKS PKS1) via ester bond formation catalyzed by the esterase EST1. The protein is NADP-dependent mannitol dehydrogenase of Aureobasidium melanogenum (Aureobasidium pullulans var. melanogenum).